A 237-amino-acid chain; its full sequence is Intracellular ribonuclease LX (237 aa).

A propeptide spanning residues Met1 to Thr24 is cleaved from the precursor. Gln36 contributes to the RNA binding site. The cysteines at positions 42 and 48 are disulfide-linked. RNA-binding positions include His63, Phe113, His116–Glu117, and Lys120–His121. The Proton donor role is filled by His63. Intrachain disulfides connect Cys78–Cys124, Cys183–Cys219, and Cys199–Cys210. Residue Glu117 is part of the active site. His121 acts as the Proton acceptor in catalysis.

Belongs to the RNase T2 family.

Its subcellular location is the cytoplasm. It catalyses the reaction a ribonucleotidyl-ribonucleotide-RNA + H2O = a 3'-end 3'-phospho-ribonucleotide-RNA + a 5'-end dephospho-ribonucleoside-RNA + H(+). In Solanum lycopersicum (Tomato), this protein is Intracellular ribonuclease LX (RNALX).